The primary structure comprises 214 residues: Methylthioribulose-1-phosphate dehydratase (214 aa).

Zn(2+) contacts are provided by histidine 103 and histidine 105.

Belongs to the aldolase class II family. MtnB subfamily. The cofactor is Zn(2+).

The enzyme catalyses 5-(methylsulfanyl)-D-ribulose 1-phosphate = 5-methylsulfanyl-2,3-dioxopentyl phosphate + H2O. Its pathway is amino-acid biosynthesis; L-methionine biosynthesis via salvage pathway; L-methionine from S-methyl-5-thio-alpha-D-ribose 1-phosphate: step 2/6. Its function is as follows. Catalyzes the dehydration of methylthioribulose-1-phosphate (MTRu-1-P) into 2,3-diketo-5-methylthiopentyl-1-phosphate (DK-MTP-1-P). In Granulibacter bethesdensis (strain ATCC BAA-1260 / CGDNIH1), this protein is Methylthioribulose-1-phosphate dehydratase.